The chain runs to 120 residues: uncharacterized protein (120 aa).

This is an uncharacterized protein from Escherichia coli O6:H1 (strain CFT073 / ATCC 700928 / UPEC).